Consider the following 207-residue polypeptide: Fibroblast growth factor 18 (207 aa).

The signal sequence occupies residues 1 to 27; that stretch reads MYSAPSACTCLCLHFLLLCFQVQVLVA. N-linked (GlcNAc...) asparagine glycosylation is present at N39. Cysteines 109 and 127 form a disulfide. Residue N137 is glycosylated (N-linked (GlcNAc...) asparagine). The segment at 157-186 is disordered; it reads GRPRKGPKTRENQQDVHFMKRYPKGQPELQ. Over residues 164-174 the composition is skewed to basic and acidic residues; that stretch reads KTRENQQDVHF.

It belongs to the heparin-binding growth factors family. Interacts with FGFR3 and FGFR4.

It localises to the secreted. Its function is as follows. Plays an important role in the regulation of cell proliferation, cell differentiation and cell migration. Required for normal ossification and bone development. Stimulates hepatic and intestinal proliferation. In Homo sapiens (Human), this protein is Fibroblast growth factor 18 (FGF18).